We begin with the raw amino-acid sequence, 184 residues long: GTP cyclohydrolase 1 (184 aa).

Residues cysteine 75, histidine 78, and cysteine 146 each coordinate Zn(2+).

The protein belongs to the GTP cyclohydrolase I family. As to quaternary structure, toroid-shaped homodecamer, composed of two pentamers of five dimers.

It catalyses the reaction GTP + H2O = 7,8-dihydroneopterin 3'-triphosphate + formate + H(+). It participates in cofactor biosynthesis; 7,8-dihydroneopterin triphosphate biosynthesis; 7,8-dihydroneopterin triphosphate from GTP: step 1/1. The polypeptide is GTP cyclohydrolase 1 (Streptococcus sanguinis (strain SK36)).